We begin with the raw amino-acid sequence, 334 residues long: Biotin synthase (334 aa).

One can recognise a Radical SAM core domain in the interval 41–260 (TRLETASLLS…IAVARIMMPR (220 aa)). 3 residues coordinate [4Fe-4S] cluster: Cys-56, Cys-60, and Cys-63. Positions 100, 131, 191, and 264 each coordinate [2Fe-2S] cluster.

The protein belongs to the radical SAM superfamily. Biotin synthase family. Homodimer. Requires [4Fe-4S] cluster as cofactor. [2Fe-2S] cluster serves as cofactor.

The enzyme catalyses (4R,5S)-dethiobiotin + (sulfur carrier)-SH + 2 reduced [2Fe-2S]-[ferredoxin] + 2 S-adenosyl-L-methionine = (sulfur carrier)-H + biotin + 2 5'-deoxyadenosine + 2 L-methionine + 2 oxidized [2Fe-2S]-[ferredoxin]. It functions in the pathway cofactor biosynthesis; biotin biosynthesis; biotin from 7,8-diaminononanoate: step 2/2. Functionally, catalyzes the conversion of dethiobiotin (DTB) to biotin by the insertion of a sulfur atom into dethiobiotin via a radical-based mechanism. In Bradyrhizobium sp. (strain ORS 278), this protein is Biotin synthase.